The chain runs to 153 residues: Xanthine-guanine phosphoribosyltransferase (153 aa).

Residues 37-38 (RG), Arg-69, and 88-96 (DDLVDTGGT) contribute to the 5-phospho-alpha-D-ribose 1-diphosphate site. Arg-69 is a binding site for GMP. Residue Asp-89 participates in Mg(2+) binding. The guanine site is built by Asp-92 and Ile-135. Xanthine-binding residues include Asp-92 and Ile-135. GMP is bound by residues 92–96 (DTGGT) and 134–135 (WI).

This sequence belongs to the purine/pyrimidine phosphoribosyltransferase family. XGPT subfamily. Homotetramer. It depends on Mg(2+) as a cofactor.

Its subcellular location is the cell membrane. It catalyses the reaction GMP + diphosphate = guanine + 5-phospho-alpha-D-ribose 1-diphosphate. The catalysed reaction is XMP + diphosphate = xanthine + 5-phospho-alpha-D-ribose 1-diphosphate. The enzyme catalyses IMP + diphosphate = hypoxanthine + 5-phospho-alpha-D-ribose 1-diphosphate. It participates in purine metabolism; GMP biosynthesis via salvage pathway; GMP from guanine: step 1/1. Its pathway is purine metabolism; XMP biosynthesis via salvage pathway; XMP from xanthine: step 1/1. Functionally, purine salvage pathway enzyme that catalyzes the transfer of the ribosyl-5-phosphate group from 5-phospho-alpha-D-ribose 1-diphosphate (PRPP) to the N9 position of the 6-oxopurines guanine and xanthine to form the corresponding ribonucleotides GMP (guanosine 5'-monophosphate) and XMP (xanthosine 5'-monophosphate), with the release of PPi. To a lesser extent, also acts on hypoxanthine. This Buchnera aphidicola subsp. Baizongia pistaciae (strain Bp) protein is Xanthine-guanine phosphoribosyltransferase.